A 258-amino-acid polypeptide reads, in one-letter code: Isoprenyl transferase (258 aa).

Aspartate 38 is an active-site residue. Residue aspartate 38 coordinates Mg(2+). Substrate-binding positions include 39-42, tryptophan 43, arginine 51, histidine 55, and 83-85; these read GNGR and STE. Asparagine 86 serves as the catalytic Proton acceptor. Substrate contacts are provided by residues tryptophan 87, arginine 89, arginine 206, and 212–214; that span reads RIS. Residue glutamate 225 participates in Mg(2+) binding.

This sequence belongs to the UPP synthase family. Homodimer. Mg(2+) is required as a cofactor.

Catalyzes the condensation of isopentenyl diphosphate (IPP) with allylic pyrophosphates generating different type of terpenoids. The sequence is that of Isoprenyl transferase from Bacillus cereus (strain ATCC 14579 / DSM 31 / CCUG 7414 / JCM 2152 / NBRC 15305 / NCIMB 9373 / NCTC 2599 / NRRL B-3711).